The sequence spans 281 residues: Glycerol uptake facilitator protein (281 aa).

The Cytoplasmic portion of the chain corresponds to 1–5; that stretch reads MSQTS. The helical transmembrane segment at 6 to 34 threads the bilayer; that stretch reads TLKGQCIAEFLGTGLLIFFGVGCVAALKV. The Periplasmic segment spans residues 35-39; the sequence is AGASF. Residues 40-60 traverse the membrane as a helical segment; sequence GQWEISVIWGLGVAMAIYLTA. Topologically, residues 61–63 are cytoplasmic; that stretch reads GVS. Residues 64–67 lie within the membrane without spanning it; it reads GAHL. The NPA 1 signature appears at 68–70; it reads NPA. Positions 68 to 78 form an intramembrane region, helical; the sequence is NPAVTIALWLF. Topologically, residues 79 to 84 are cytoplasmic; the sequence is ACFDKR. Residues 85 to 108 form a helical membrane-spanning segment; that stretch reads KVIPFIVSQVAGAFCAAALVYGLY. Over 109 to 143 the chain is Periplasmic; it reads YNLFFDFEQTHHIVRGSVESVDLAGTFSTYPNPHI. A helical membrane pass occupies residues 144–169; it reads NFVQAFAVEMVITAILMGLILALTDD. Residues 170-177 lie on the Cytoplasmic side of the membrane; the sequence is GNGVPRGP. A helical transmembrane segment spans residues 178 to 194; the sequence is LAPLLIGLLIAVIGASM. Topologically, residues 195-198 are periplasmic; that stretch reads GPLT. An intramembrane segment occupies 199–202; it reads GFAM. Residues 203–205 carry the NPA 2 motif; that stretch reads NPA. The helical intramembrane region spans 203–216; sequence NPARDFGPKVFAWL. Topologically, residues 217–231 are periplasmic; that stretch reads AGWGNVAFTGGRDIP. Residues 232–254 form a helical membrane-spanning segment; that stretch reads YFLVPLFGPIVGAIVGAFAYRKL. Residues 255 to 281 are Cytoplasmic-facing; it reads IGRHLPCDICVVEEKETTTPSEQKASL.

It belongs to the MIP/aquaporin (TC 1.A.8) family. Homotetramer.

The protein resides in the cell inner membrane. The enzyme catalyses glycerol(in) = glycerol(out). Its function is as follows. Mediates glycerol diffusion across the cytoplasmic membrane via a pore-type mechanism. The polypeptide is Glycerol uptake facilitator protein (glpF) (Escherichia coli O157:H7).